Reading from the N-terminus, the 360-residue chain is Phosphoserine aminotransferase (360 aa).

Residue Arg-42 coordinates L-glutamate. Residues 76–77 (AR), Trp-102, Thr-153, Asp-172, and Gln-195 each bind pyridoxal 5'-phosphate. Lys-196 is modified (N6-(pyridoxal phosphate)lysine). A pyridoxal 5'-phosphate-binding site is contributed by 237–238 (NT).

It belongs to the class-V pyridoxal-phosphate-dependent aminotransferase family. SerC subfamily. Homodimer. It depends on pyridoxal 5'-phosphate as a cofactor.

Its subcellular location is the cytoplasm. It carries out the reaction O-phospho-L-serine + 2-oxoglutarate = 3-phosphooxypyruvate + L-glutamate. It catalyses the reaction 4-(phosphooxy)-L-threonine + 2-oxoglutarate = (R)-3-hydroxy-2-oxo-4-phosphooxybutanoate + L-glutamate. It functions in the pathway amino-acid biosynthesis; L-serine biosynthesis; L-serine from 3-phospho-D-glycerate: step 2/3. The protein operates within cofactor biosynthesis; pyridoxine 5'-phosphate biosynthesis; pyridoxine 5'-phosphate from D-erythrose 4-phosphate: step 3/5. Catalyzes the reversible conversion of 3-phosphohydroxypyruvate to phosphoserine and of 3-hydroxy-2-oxo-4-phosphonooxybutanoate to phosphohydroxythreonine. The chain is Phosphoserine aminotransferase from Aliivibrio fischeri (strain ATCC 700601 / ES114) (Vibrio fischeri).